Consider the following 131-residue polypeptide: Small ribosomal subunit protein uS8 (131 aa).

The protein belongs to the universal ribosomal protein uS8 family. As to quaternary structure, part of the 30S ribosomal subunit. Contacts proteins S5 and S12.

Functionally, one of the primary rRNA binding proteins, it binds directly to 16S rRNA central domain where it helps coordinate assembly of the platform of the 30S subunit. The polypeptide is Small ribosomal subunit protein uS8 (Laribacter hongkongensis (strain HLHK9)).